Consider the following 319-residue polypeptide: MNLCLDSLLNGTQDPKAFGRVAVLFGGKSAEREVSLKSGAMVLQSLLAAGVDAFGIDVGEDLLQRLVEEKIDRAFIILHGRGGEDGSMQGLLECAGIPYTGSGVLASALAMDKLRTKRVWLSLGLPTPDYAVLASEDDCREAAQRLGFPLIVKPAHEGSSIGMAKVGGLDELIAAWREAARYDSQVLVEQWISGPEFTVATLRGQVLPAIRLGTPHTFYDYDAKYLASDTRYQVPCGLDEAKERELKELTARACDALGIQGWGRADVMQDAEGRFWLLEVNTAPGMTDHSLVPMAARAAGLDFQQLVLAILADSREARG.

Residues 117–312 form the ATP-grasp domain; that stretch reads KRVWLSLGLP…FQQLVLAILA (196 aa). 143–198 is a binding site for ATP; that stretch reads AQRLGFPLIVKPAHEGSSIGMAKVGGLDELIAAWREAARYDSQVLVEQWISGPEFT. The Mg(2+) site is built by aspartate 266, glutamate 279, and asparagine 281.

Belongs to the D-alanine--D-alanine ligase family. It depends on Mg(2+) as a cofactor. Mn(2+) is required as a cofactor.

Its subcellular location is the cytoplasm. It catalyses the reaction 2 D-alanine + ATP = D-alanyl-D-alanine + ADP + phosphate + H(+). Its pathway is cell wall biogenesis; peptidoglycan biosynthesis. In terms of biological role, cell wall formation. This chain is D-alanine--D-alanine ligase B, found in Pseudomonas aeruginosa (strain ATCC 15692 / DSM 22644 / CIP 104116 / JCM 14847 / LMG 12228 / 1C / PRS 101 / PAO1).